A 388-amino-acid chain; its full sequence is Succinate--CoA ligase [ADP-forming] subunit beta (388 aa).

The ATP-grasp domain maps to K9–Q244. ATP contacts are provided by residues K46, G53–G55, E99, T102, and E107. Mg(2+) contacts are provided by N199 and D213. Residues N264 and G321–V323 contribute to the substrate site.

Belongs to the succinate/malate CoA ligase beta subunit family. As to quaternary structure, heterotetramer of two alpha and two beta subunits. Mg(2+) is required as a cofactor.

The enzyme catalyses succinate + ATP + CoA = succinyl-CoA + ADP + phosphate. It catalyses the reaction GTP + succinate + CoA = succinyl-CoA + GDP + phosphate. It participates in carbohydrate metabolism; tricarboxylic acid cycle; succinate from succinyl-CoA (ligase route): step 1/1. Succinyl-CoA synthetase functions in the citric acid cycle (TCA), coupling the hydrolysis of succinyl-CoA to the synthesis of either ATP or GTP and thus represents the only step of substrate-level phosphorylation in the TCA. The beta subunit provides nucleotide specificity of the enzyme and binds the substrate succinate, while the binding sites for coenzyme A and phosphate are found in the alpha subunit. The sequence is that of Succinate--CoA ligase [ADP-forming] subunit beta from Shigella boydii serotype 18 (strain CDC 3083-94 / BS512).